The sequence spans 110 residues: Putative UPF0377 protein YIR040C (110 aa).

The protein belongs to the UPF0377 family.

This Saccharomyces cerevisiae (strain ATCC 204508 / S288c) (Baker's yeast) protein is Putative UPF0377 protein YIR040C.